A 223-amino-acid chain; its full sequence is Ribosomal RNA small subunit methyltransferase G (223 aa).

Positions 85, 90, and 154 each coordinate S-adenosyl-L-methionine.

This sequence belongs to the methyltransferase superfamily. RNA methyltransferase RsmG family.

Its subcellular location is the cytoplasm. It catalyses the reaction guanosine(527) in 16S rRNA + S-adenosyl-L-methionine = N(7)-methylguanosine(527) in 16S rRNA + S-adenosyl-L-homocysteine. Specifically methylates the N7 position of guanine in position 527 of 16S rRNA. This is Ribosomal RNA small subunit methyltransferase G from Rhodopseudomonas palustris (strain ATCC BAA-98 / CGA009).